A 101-amino-acid chain; its full sequence is Phosphoribosyl-AMP cyclohydrolase (101 aa).

Aspartate 71 contributes to the Mg(2+) binding site. Cysteine 72 lines the Zn(2+) pocket. 2 residues coordinate Mg(2+): aspartate 73 and aspartate 75. Zn(2+)-binding residues include cysteine 88 and cysteine 95.

Belongs to the PRA-CH family. In terms of assembly, homodimer. Requires Mg(2+) as cofactor. Zn(2+) is required as a cofactor.

It localises to the cytoplasm. It carries out the reaction 1-(5-phospho-beta-D-ribosyl)-5'-AMP + H2O = 1-(5-phospho-beta-D-ribosyl)-5-[(5-phospho-beta-D-ribosylamino)methylideneamino]imidazole-4-carboxamide. Its pathway is amino-acid biosynthesis; L-histidine biosynthesis; L-histidine from 5-phospho-alpha-D-ribose 1-diphosphate: step 3/9. Catalyzes the hydrolysis of the adenine ring of phosphoribosyl-AMP. This chain is Phosphoribosyl-AMP cyclohydrolase, found in Bacillus cereus (strain G9842).